The sequence spans 623 residues: uncharacterized protein (623 aa).

Over residues 157–166 the composition is skewed to basic and acidic residues; it reads LNESPLRDQQ. Residues 157–237 are disordered; sequence LNESPLRDQQ…QGLPDHNNSI (81 aa). Polar residues predominate over residues 167–177; that stretch reads ESSTPSKNSTL. The segment covering 193–210 has biased composition (low complexity); it reads AFRPLPSPSRRSSQSAPA.

This is an uncharacterized protein from Macaca fascicularis (Crab-eating macaque).